We begin with the raw amino-acid sequence, 505 residues long: Glutamate--tRNA ligase (505 aa).

Positions 16–26 (PSPTGFPHVGT) match the 'HIGH' region motif. The short motif at 257 to 261 (KLSKR) is the 'KMSKS' region element. Residue Lys260 participates in ATP binding.

The protein belongs to the class-I aminoacyl-tRNA synthetase family. Glutamate--tRNA ligase type 1 subfamily. As to quaternary structure, monomer.

It localises to the cytoplasm. The catalysed reaction is tRNA(Glu) + L-glutamate + ATP = L-glutamyl-tRNA(Glu) + AMP + diphosphate. Catalyzes the attachment of glutamate to tRNA(Glu) in a two-step reaction: glutamate is first activated by ATP to form Glu-AMP and then transferred to the acceptor end of tRNA(Glu). This chain is Glutamate--tRNA ligase, found in Psychrobacter sp. (strain PRwf-1).